The chain runs to 319 residues: 4-hydroxy-3-methylbut-2-enyl diphosphate reductase (319 aa).

Cys-15 is a [4Fe-4S] cluster binding site. Residues His-44 and His-77 each contribute to the (2E)-4-hydroxy-3-methylbut-2-enyl diphosphate site. The dimethylallyl diphosphate site is built by His-44 and His-77. 2 residues coordinate isopentenyl diphosphate: His-44 and His-77. Position 99 (Cys-99) interacts with [4Fe-4S] cluster. His-127 serves as a coordination point for (2E)-4-hydroxy-3-methylbut-2-enyl diphosphate. His-127 is a binding site for dimethylallyl diphosphate. An isopentenyl diphosphate-binding site is contributed by His-127. The active-site Proton donor is the Glu-129. A (2E)-4-hydroxy-3-methylbut-2-enyl diphosphate-binding site is contributed by Thr-167. Cys-197 is a [4Fe-4S] cluster binding site. (2E)-4-hydroxy-3-methylbut-2-enyl diphosphate-binding residues include Ser-225, Ser-226, Asn-227, and Ser-269. Ser-225, Ser-226, Asn-227, and Ser-269 together coordinate dimethylallyl diphosphate. The isopentenyl diphosphate site is built by Ser-225, Ser-226, Asn-227, and Ser-269.

It belongs to the IspH family. [4Fe-4S] cluster serves as cofactor.

The enzyme catalyses isopentenyl diphosphate + 2 oxidized [2Fe-2S]-[ferredoxin] + H2O = (2E)-4-hydroxy-3-methylbut-2-enyl diphosphate + 2 reduced [2Fe-2S]-[ferredoxin] + 2 H(+). The catalysed reaction is dimethylallyl diphosphate + 2 oxidized [2Fe-2S]-[ferredoxin] + H2O = (2E)-4-hydroxy-3-methylbut-2-enyl diphosphate + 2 reduced [2Fe-2S]-[ferredoxin] + 2 H(+). The protein operates within isoprenoid biosynthesis; dimethylallyl diphosphate biosynthesis; dimethylallyl diphosphate from (2E)-4-hydroxy-3-methylbutenyl diphosphate: step 1/1. It participates in isoprenoid biosynthesis; isopentenyl diphosphate biosynthesis via DXP pathway; isopentenyl diphosphate from 1-deoxy-D-xylulose 5-phosphate: step 6/6. Its function is as follows. Catalyzes the conversion of 1-hydroxy-2-methyl-2-(E)-butenyl 4-diphosphate (HMBPP) into a mixture of isopentenyl diphosphate (IPP) and dimethylallyl diphosphate (DMAPP). Acts in the terminal step of the DOXP/MEP pathway for isoprenoid precursor biosynthesis. In Rhodopirellula baltica (strain DSM 10527 / NCIMB 13988 / SH1), this protein is 4-hydroxy-3-methylbut-2-enyl diphosphate reductase.